Reading from the N-terminus, the 160-residue chain is MAPK regulated corepressor interacting protein 2 (160 aa).

Position 1 is an N-acetylmethionine (methionine 1). Residues 1 to 22 (MYTITKGPSKLVAQRRTGPTQQ) form a disordered region. Arginine 35 is modified (omega-N-methylarginine). Residues 43-64 (LPAHLQPSAQTQGPWPLASSGP) are disordered. Serine 61 bears the Phosphoserine mark. Arginine 65 is modified (omega-N-methylarginine). Serine 82 bears the Phosphoserine mark.

This sequence belongs to the MCRIP family. In terms of assembly, interacts with DDX6. Interacts with MCRIP1.

It is found in the cytoplasm. The protein localises to the stress granule. The protein resides in the nucleus. This chain is MAPK regulated corepressor interacting protein 2 (Mcrip2), found in Mus musculus (Mouse).